The primary structure comprises 548 residues: 1,3-beta-glucanosyltransferase gel4 (548 aa).

A signal peptide spans 1–25 (MKFVYAAAGASLVGSALATLPVIEA). 2 N-linked (GlcNAc...) asparagine glycosylation sites follow: N51 and N69. The cysteines at positions 88 and 117 are disulfide-linked. (1,3-beta-D-glucosyl)n is bound by residues Y106, 133-141 (SAPSESINR), N174, and E175. E175 (proton donor) is an active-site residue. N-linked (GlcNAc...) asparagine glycosylation occurs at N181. The (1,3-beta-D-glucosyl)n site is built by D217 and R222. Cystine bridges form between C231/C364, C249/C280, C386/C437, C395/C461, and C414/C419. E277 (nucleophile) is an active-site residue. (1,3-beta-D-glucosyl)n is bound at residue Y309. N-linked (GlcNAc...) asparagine glycosylation is present at N425. A519 is lipidated: GPI-like-anchor amidated alanine. Positions 520 to 548 (SPMAVKVGNWQFGAYIATALFAGVGMLVL) are cleaved as a propeptide — removed in mature form.

It belongs to the glycosyl hydrolase 72 family. The GPI-like anchor contains a phosphoceramide lipid group.

The protein localises to the cell membrane. Functionally, splits internally a 1,3-beta-glucan molecule and transfers the newly generated reducing end (the donor) to the non-reducing end of another 1,3-beta-glucan molecule (the acceptor) forming a 1,3-beta linkage, resulting in the elongation of 1,3-beta-glucan chains in the cell wall. Involved in cell wall morphogenesis. This chain is 1,3-beta-glucanosyltransferase gel4 (gel4), found in Aspergillus fumigatus (strain ATCC MYA-4609 / CBS 101355 / FGSC A1100 / Af293) (Neosartorya fumigata).